Reading from the N-terminus, the 501-residue chain is MDHFKQLEVWFVIGSQHLYGPETLRQVKENAEKVVAGLNQQANLPVKLVLKPLVKTPDEILALCRDANYQDNCIGLLTWLHTFSPAKMWIGGLSVLSKPLLQFHTQFNAEVPWDTMDMDFMNLNQTAHGGREFGFIGARMRQAHQVVVGHWQDKNAHVRIGKWMRVAAAIQESKQLKVARFGDNMREVAVTEGDKVGAQIQFGYSVSAWGLGDLTAVVDAVSKGDIDALIEEYETSYQLTDAVKLNGANRQNLLDAAQIELGMKRFLEQGGYHAFTTDFENLYGLKQLPGLAVQRLMQQGYGFGGEGDWKTAALLRIMKVMAGGLSGGTSFMEDYTYNFQNGNDLVVGSHMLEVCPTIAKEQKPILDAQHLGIGGKADPARLIFSTPAGPSLNASVIDMGDRFRMLVNLVDTIEQPRPLPKLPVARAIWKAQPSLEVAAEAWILAGGAHHTVFSQALDLDHMRLYAEMQNIELLVIDNETRLHEFKDALRWNEVYYKLCSR.

Mn(2+)-binding residues include glutamate 306, glutamate 333, histidine 350, and histidine 450.

The protein belongs to the arabinose isomerase family. As to quaternary structure, homohexamer. Requires Mn(2+) as cofactor.

The catalysed reaction is beta-L-arabinopyranose = L-ribulose. It functions in the pathway carbohydrate degradation; L-arabinose degradation via L-ribulose; D-xylulose 5-phosphate from L-arabinose (bacterial route): step 1/3. In terms of biological role, catalyzes the conversion of L-arabinose to L-ribulose. The sequence is that of L-arabinose isomerase from Pectobacterium atrosepticum (strain SCRI 1043 / ATCC BAA-672) (Erwinia carotovora subsp. atroseptica).